Here is a 1388-residue protein sequence, read N- to C-terminus: DNA-directed RNA polymerase subunit beta' (1388 aa).

Zn(2+) is bound by residues Cys-65, Cys-67, Cys-80, and Cys-83. Mg(2+) contacts are provided by Asp-456, Asp-458, and Asp-460. 4 residues coordinate Zn(2+): Cys-812, Cys-887, Cys-894, and Cys-897.

It belongs to the RNA polymerase beta' chain family. In terms of assembly, the RNAP catalytic core consists of 2 alpha, 1 beta, 1 beta' and 1 omega subunit. When a sigma factor is associated with the core the holoenzyme is formed, which can initiate transcription. Mg(2+) is required as a cofactor. It depends on Zn(2+) as a cofactor.

It carries out the reaction RNA(n) + a ribonucleoside 5'-triphosphate = RNA(n+1) + diphosphate. DNA-dependent RNA polymerase catalyzes the transcription of DNA into RNA using the four ribonucleoside triphosphates as substrates. This is DNA-directed RNA polymerase subunit beta' from Protochlamydia amoebophila (strain UWE25).